Consider the following 391-residue polypeptide: Ethanol acetyltransferase 1 (391 aa).

The transit peptide at 1–24 directs the protein to the mitochondrion; that stretch reads MFFTKVLNNQVANGLKQLPVHKRV. The AB hydrolase-1 domain maps to 48 to 154; sequence PIVFVHGIFG…DNSPIEQPHI (107 aa). Residues S121, D145, and H295 each act as charge relay system in the active site.

The protein belongs to the AB hydrolase superfamily.

It is found in the mitochondrion. The catalysed reaction is ethanol + acetyl-CoA = ethyl acetate + CoA. It carries out the reaction acetyl-CoA + H2O = acetate + CoA + H(+). The enzyme catalyses ethyl acetate + H2O = ethanol + acetate + H(+). With respect to regulation, by ethanol. Thioesterase and esterase reactions are highly repressed in the presence of high ethanol concentrations. Its function is as follows. Alcohol acetyltransferase that catalyzes the synthesis of ethyl acetate from ethanol and acetyl-CoA. Can also function as a thioesterase by hydrolyzing acetyl-CoA in the absence of ethanol, as well as esterase hydrolyzing ethyl acetate. The polypeptide is Ethanol acetyltransferase 1 (EAT1) (Wickerhamomyces anomalus (strain ATCC 58044 / CBS 1984 / NCYC 433 / NRRL Y-366-8) (Yeast)).